Consider the following 495-residue polypeptide: MQNIGFAAGSLIKGRWTVVKKIGQGAFGEIFSGKNIINNEQIAIKVEKVDTKKQVLRLEVAVLKKLQLCPYVCRFITCGRHNDYNYMVMELLGENLSELRRKQLDGKFSLGSTLKLGVQMIQSLQAVHDLGYLHRDVKPSNFAIGLNPSKRNITYLIDFGLARRFVLASGEVRPARESTGFRGTARYASINSHLSKDLGRRDDLWSIFYVLIEFAEGQLPWRKLKDKDQIGEMKQKYNTPDLVKDLPPQFSQFMKHLKSLNYEDRPNYVFLQTLLNDCYTSLGLSESTPFDWEVQTNSGASSSSSNTTQQQQQQQQQQQQRNLNQSGLNNSSARLMASPSTIDVEASGKSTQLNNSNNNNNNNNKGLGAENDSSPQPQIIRRNSESNSQIANSSESDNKGSGGGSWNQKSSSPRHKDKNLQDDGGEGSQKHLKASNNNNINNNNNNYNNNNNNNNNSHMNGNGSNSQPIDKIELSHQQQKSSTTKCCSTSKCSVM.

The Protein kinase domain occupies 16–275; it reads WTVVKKIGQG…PNYVFLQTLL (260 aa). ATP is bound by residues 22–30 and Lys-45; that span reads IGQGAFGEI. Asp-136 acts as the Proton acceptor in catalysis. The tract at residues 293-469 is disordered; it reads EVQTNSGASS…NGNGSNSQPI (177 aa). 2 stretches are compositionally biased toward low complexity: residues 295 to 333 and 354 to 364; these read QTNS…NSSA and NNSNNNNNNNN. Residues 385-395 are compositionally biased toward polar residues; the sequence is ESNSQIANSSE. Residues 435–466 are compositionally biased toward low complexity; that stretch reads SNNNNINNNNNNYNNNNNNNNNSHMNGNGSNS.

It belongs to the protein kinase superfamily. CK1 Ser/Thr protein kinase family.

The polypeptide is Probable serine/threonine-protein kinase DDB_G0292354 (Dictyostelium discoideum (Social amoeba)).